The sequence spans 474 residues: 3-isopropylmalate dehydratase large subunit (474 aa).

[4Fe-4S] cluster-binding residues include cysteine 355, cysteine 415, and cysteine 418.

The protein belongs to the aconitase/IPM isomerase family. LeuC type 1 subfamily. As to quaternary structure, heterodimer of LeuC and LeuD. [4Fe-4S] cluster is required as a cofactor.

The enzyme catalyses (2R,3S)-3-isopropylmalate = (2S)-2-isopropylmalate. It functions in the pathway amino-acid biosynthesis; L-leucine biosynthesis; L-leucine from 3-methyl-2-oxobutanoate: step 2/4. In terms of biological role, catalyzes the isomerization between 2-isopropylmalate and 3-isopropylmalate, via the formation of 2-isopropylmaleate. The chain is 3-isopropylmalate dehydratase large subunit from Shewanella sp. (strain MR-4).